The chain runs to 113 residues: Small ribosomal subunit protein bS6 (113 aa).

It belongs to the bacterial ribosomal protein bS6 family.

Functionally, binds together with bS18 to 16S ribosomal RNA. This is Small ribosomal subunit protein bS6 from Buchnera aphidicola subsp. Schizaphis graminum (strain Sg).